Here is a 219-residue protein sequence, read N- to C-terminus: 16S rRNA (adenine(1408)-N(1))-methyltransferase (219 aa).

Residues G32, N38, D55, 87–88 (AE), 104–109 (LFPWGT), and 195–197 (SLW) contribute to the S-adenosyl-L-methionine site.

Belongs to the methyltransferase superfamily. Kanamycin-apramycin resistance family.

It carries out the reaction adenosine(1408) in 16S rRNA + S-adenosyl-L-methionine = N(1)-methyladenosine(1408) in 16S rRNA + S-adenosyl-L-homocysteine + H(+). Functionally, specifically methylates the N(1) position of adenine 1408 in 16S rRNA. Confers resistance to various aminoglycosides, including kanamycin, neomycin, apramycin, ribostamycin and gentamicin. Methylates only fully assembled 30S subunits. This Escherichia coli protein is 16S rRNA (adenine(1408)-N(1))-methyltransferase (npmA).